Here is a 212-residue protein sequence, read N- to C-terminus: Maleylpyruvate isomerase (212 aa).

One can recognise a GST N-terminal domain in the interval 1–80 (MKLYNFWRSG…WLEEQYPTPA (80 aa)). Glutathione contacts are provided by residues 9–11 (SGT), histidine 38, valine 52, 64–65 (QS), 102–104 (DIH), 108–110 (NRR), and arginine 176. In terms of domain architecture, GST C-terminal spans 85–212 (DADGRQRVRA…AAPAAQPDSA (128 aa)).

It belongs to the GST superfamily. Zeta family. As to quaternary structure, homodimer. The cofactor is glutathione.

The enzyme catalyses 3-maleylpyruvate = 3-fumarylpyruvate. It participates in aromatic compound metabolism; naphthalene degradation. Functionally, catalyzes the GSH-dependent isomerization of maleylpyruvate to fumarylpyruvate which is subsequently processed by NagK to form pyruvate and fumarate. The protein is Maleylpyruvate isomerase of Ralstonia sp.